Consider the following 180-residue polypeptide: MHTINSPDVPSAHAIREQLRAGSEIHVRGHVTHKHHKDFSVELLSGPHIVLHVNFRFEHDHIVAMNTCTNGAWGAEIRHHNPLKHHDHFNLSIHVHEGYYHISVNGEHLADFPHRFPVESVQAIGLKGAAHIDEISFSGFEFGVDWNSQHDFGHAGYNSYGTETYVAPVFQETHSYNAYF.

A Galectin domain is found at 11–138 (SAHAIREQLR…AAHIDEISFS (128 aa)).

The polypeptide is Probable galaptin lec-8 (lec-8) (Caenorhabditis elegans).